The chain runs to 544 residues: Chaperonin GroEL (544 aa).

Residues 29–32 (TLGP), Lys-50, 86–90 (DGTTT), Gly-414, and Asp-495 contribute to the ATP site.

Belongs to the chaperonin (HSP60) family. Forms a cylinder of 14 subunits composed of two heptameric rings stacked back-to-back. Interacts with the co-chaperonin GroES.

It is found in the cytoplasm. The catalysed reaction is ATP + H2O + a folded polypeptide = ADP + phosphate + an unfolded polypeptide.. Together with its co-chaperonin GroES, plays an essential role in assisting protein folding. The GroEL-GroES system forms a nano-cage that allows encapsulation of the non-native substrate proteins and provides a physical environment optimized to promote and accelerate protein folding. The protein is Chaperonin GroEL of Treponema pallidum subsp. pallidum (strain SS14).